The primary structure comprises 251 residues: 3-deoxy-manno-octulosonate cytidylyltransferase (251 aa).

It belongs to the KdsB family.

The protein localises to the cytoplasm. The enzyme catalyses 3-deoxy-alpha-D-manno-oct-2-ulosonate + CTP = CMP-3-deoxy-beta-D-manno-octulosonate + diphosphate. Its pathway is nucleotide-sugar biosynthesis; CMP-3-deoxy-D-manno-octulosonate biosynthesis; CMP-3-deoxy-D-manno-octulosonate from 3-deoxy-D-manno-octulosonate and CTP: step 1/1. The protein operates within bacterial outer membrane biogenesis; lipopolysaccharide biosynthesis. Its function is as follows. Activates KDO (a required 8-carbon sugar) for incorporation into bacterial lipopolysaccharide in Gram-negative bacteria. The protein is 3-deoxy-manno-octulosonate cytidylyltransferase of Rhizobium johnstonii (strain DSM 114642 / LMG 32736 / 3841) (Rhizobium leguminosarum bv. viciae).